Here is a 29-residue protein sequence, read N- to C-terminus: Cytochrome b6-f complex subunit 8 (29 aa).

Residues 3–23 (IVSFAWAALMVVFTFSLSLVV) traverse the membrane as a helical segment.

It belongs to the PetN family. As to quaternary structure, the 4 large subunits of the cytochrome b6-f complex are cytochrome b6, subunit IV (17 kDa polypeptide, PetD), cytochrome f and the Rieske protein, while the 4 small subunits are PetG, PetL, PetM and PetN. The complex functions as a dimer.

It localises to the plastid. It is found in the chloroplast thylakoid membrane. Functionally, component of the cytochrome b6-f complex, which mediates electron transfer between photosystem II (PSII) and photosystem I (PSI), cyclic electron flow around PSI, and state transitions. In Phalaenopsis aphrodite subsp. formosana (Moth orchid), this protein is Cytochrome b6-f complex subunit 8.